The following is a 204-amino-acid chain: Ribonuclease HII (204 aa).

The 197-residue stretch at 1-197 (MILGIDEAGR…KNRILNPKLL (197 aa)) folds into the RNase H type-2 domain. Residues aspartate 6, glutamate 7, and aspartate 103 each contribute to the a divalent metal cation site.

This sequence belongs to the RNase HII family. It depends on Mn(2+) as a cofactor. The cofactor is Mg(2+).

It is found in the cytoplasm. The enzyme catalyses Endonucleolytic cleavage to 5'-phosphomonoester.. Functionally, endonuclease that specifically degrades the RNA of RNA-DNA hybrids. This Helicobacter pylori (strain Shi470) protein is Ribonuclease HII.